The sequence spans 113 residues: U11-theraphotoxin-Hhn1r (113 aa).

Positions 1–21 are cleaved as a signal peptide; the sequence is MNTVRVTFLLVFVLAVSLGQA. Positions 22–74 are excised as a propeptide; sequence DKDENRMEMQEKTEQGKSYLDFAENLLLQKLEELEAKLLEEDSEESRNSRQKR. The disordered stretch occupies residues 61–83; the sequence is EEDSEESRNSRQKRCIGEGVPCD. Cystine bridges form between C75–C90, C82–C95, and C89–C110.

The protein belongs to the neurotoxin 14 (magi-1) family. 01 (HNTX-16) subfamily. As to expression, expressed by the venom gland.

Its subcellular location is the secreted. Functionally, probable ion channel inhibitor. The polypeptide is U11-theraphotoxin-Hhn1r (Cyriopagopus hainanus (Chinese bird spider)).